Here is a 95-residue protein sequence, read N- to C-terminus: Aspartyl/glutamyl-tRNA(Asn/Gln) amidotransferase subunit C (95 aa).

This sequence belongs to the GatC family. In terms of assembly, heterotrimer of A, B and C subunits.

The enzyme catalyses L-glutamyl-tRNA(Gln) + L-glutamine + ATP + H2O = L-glutaminyl-tRNA(Gln) + L-glutamate + ADP + phosphate + H(+). It carries out the reaction L-aspartyl-tRNA(Asn) + L-glutamine + ATP + H2O = L-asparaginyl-tRNA(Asn) + L-glutamate + ADP + phosphate + 2 H(+). Its function is as follows. Allows the formation of correctly charged Asn-tRNA(Asn) or Gln-tRNA(Gln) through the transamidation of misacylated Asp-tRNA(Asn) or Glu-tRNA(Gln) in organisms which lack either or both of asparaginyl-tRNA or glutaminyl-tRNA synthetases. The reaction takes place in the presence of glutamine and ATP through an activated phospho-Asp-tRNA(Asn) or phospho-Glu-tRNA(Gln). This is Aspartyl/glutamyl-tRNA(Asn/Gln) amidotransferase subunit C from Chelativorans sp. (strain BNC1).